Reading from the N-terminus, the 253-residue chain is Triosephosphate isomerase, cytosolic (253 aa).

Asparagine 10 and lysine 12 together coordinate substrate. Histidine 96 functions as the Electrophile in the catalytic mechanism. Glutamate 166 serves as the catalytic Proton acceptor.

The protein belongs to the triosephosphate isomerase family. Homodimer.

It localises to the cytoplasm. The enzyme catalyses D-glyceraldehyde 3-phosphate = dihydroxyacetone phosphate. It functions in the pathway carbohydrate biosynthesis; gluconeogenesis. The protein operates within carbohydrate degradation; glycolysis; D-glyceraldehyde 3-phosphate from glycerone phosphate: step 1/1. The protein is Triosephosphate isomerase, cytosolic of Zea mays (Maize).